Here is a 129-residue protein sequence, read N- to C-terminus: MTEDLFGDLQDDTILAHLDNPAEDTSRFPALLAELNDLLRGELSRLGVDPAHSLEIVVAICKHLGGGQVYIPRGQALDSLIRDLRIWNDFNGRNVSELTTRYGVTFNTVYKAIRRMRRLKYRQYQPSLL.

The tract at residues 28–64 (FPALLAELNDLLRGELSRLGVDPAHSLEIVVAICKHL) is dimerization. The segment at 77 to 129 (LDSLIRDLRIWNDFNGRNVSELTTRYGVTFNTVYKAIRRMRRLKYRQYQPSLL) is DNA-binding. The H-T-H motif DNA-binding region spans 94-114 (NVSELTTRYGVTFNTVYKAIR).

It belongs to the c/mor transcriptional regulatory family. Homodimer.

The protein resides in the host cytoplasm. In terms of biological role, activator of the Pm promoter, which controls middle genes expression. Activation of Pm allows expression of protein C necessary for late gene expression. In addition to Mor binding, activation of Pm might require the interaction of Mor with the C-terminus of host RNAP subunits RpoA and RpoH. The protein is Middle operon regulator (mor) of Escherichia phage Mu (Bacteriophage Mu).